The sequence spans 703 residues: Centrosomal protein of 63 kDa (703 aa).

Position 1 is an N-acetylmethionine (Met-1). 4 coiled-coil regions span residues 22–199, 242–306, 353–533, and 676–703; these read EAEL…ESVE, MTVL…QHAV, LEGS…STQM, and HILE…TALK. A Phosphoserine modification is found at Ser-278.

The protein belongs to the CEP63 family. In terms of assembly, interacts with CEP152 and CDK1; these interactions recruit both ligands to centrosomes. Interacts with CDK2, CDK5RAP2, WDR62, CEP90, KIAA0753/moonraker and CCDC14. CEP63, CDK5RAP2, CEP152, WDR62 are proposed to form a stepwise assembled complex at the centrosome forming a ring near parental centrioles. Interacts with CCDC57; the interaction is required for their location to proximal end of centrioles. Interacts with FXR1; promoting its stabilization. As to quaternary structure, (Microbial infection) Interacts with zika virus serine protease NS3; this interaction disorganizes the centrosome. In terms of processing, polyubiquitinated via 'Lys-48'-linked ubiquitin, leading to its degradation. Deubiquitinated by USP36, promoting its stabilization.

Its subcellular location is the cytoplasm. The protein resides in the cytoskeleton. It is found in the microtubule organizing center. It localises to the centrosome. The protein localises to the centriole. Its subcellular location is the centriolar satellite. Required for normal spindle assembly. Plays a key role in mother-centriole-dependent centriole duplication; the function seems also to involve CEP152, CDK5RAP2 and WDR62 through a stepwise assembled complex at the centrosome that recruits CDK2 required for centriole duplication. Reported to be required for centrosomal recruitment of CEP152; however, this function has been questioned. Also recruits CDK1 to centrosomes. Plays a role in DNA damage response. Following DNA damage, such as double-strand breaks (DSBs), is removed from centrosomes; this leads to the inactivation of spindle assembly and delay in mitotic progression. Promotes stabilization of FXR1 protein by inhibiting FXR1 ubiquitination. This Homo sapiens (Human) protein is Centrosomal protein of 63 kDa.